We begin with the raw amino-acid sequence, 370 residues long: Ribosomal RNA small subunit methyltransferase H (370 aa).

S-adenosyl-L-methionine is bound by residues 85-87, aspartate 104, tyrosine 131, aspartate 152, and glutamine 159; that span reads GGH. Basic and acidic residues-rich tracts occupy residues 332 to 345 and 353 to 370; these read GAER…ERNP and RALE…RDAR. The disordered stretch occupies residues 332–370; that stretch reads GAERATPEEIERNPRSAPVRLRALEKVAGRPTTARRDAR.

Belongs to the methyltransferase superfamily. RsmH family.

The protein localises to the cytoplasm. It carries out the reaction cytidine(1402) in 16S rRNA + S-adenosyl-L-methionine = N(4)-methylcytidine(1402) in 16S rRNA + S-adenosyl-L-homocysteine + H(+). In terms of biological role, specifically methylates the N4 position of cytidine in position 1402 (C1402) of 16S rRNA. In Mycobacterium sp. (strain KMS), this protein is Ribosomal RNA small subunit methyltransferase H.